Consider the following 548-residue polypeptide: Folylpolyglutamate synthase (548 aa).

130–133 (GKGS) serves as a coordination point for ATP. Mg(2+) is bound by residues Ser157, Glu234, and His262. ATP contacts are provided by Arg382 and Asp396.

Belongs to the folylpolyglutamate synthase family. It depends on a monovalent cation as a cofactor.

It is found in the mitochondrion inner membrane. Its subcellular location is the mitochondrion matrix. The protein resides in the cytoplasm. It catalyses the reaction (6S)-5,6,7,8-tetrahydrofolyl-(gamma-L-Glu)(n) + L-glutamate + ATP = (6S)-5,6,7,8-tetrahydrofolyl-(gamma-L-Glu)(n+1) + ADP + phosphate + H(+). The protein operates within cofactor biosynthesis; tetrahydrofolylpolyglutamate biosynthesis. Functionally, catalyzes conversion of folates to polyglutamate derivatives allowing concentration of folate compounds in the cell and the intracellular retention of these cofactors, which are important substrates for most of the folate-dependent enzymes that are involved in one-carbon transfer reactions involved in purine, pyrimidine and amino acid synthesis. Required for methionine synthesis and maintenance of intact mitochondrial DNA. Involved in telomere maintenance. The chain is Folylpolyglutamate synthase from Saccharomyces cerevisiae (strain AWRI796) (Baker's yeast).